The following is a 190-amino-acid chain: MELILGSQSSARANLLKEHGIKFEQKALYFDEESLKTTDPREFVYLACKGKLEKAKELLANNCVIVVADSVVSVGNRMQRKAKNKQEALEFLKRQNGNEIEVLTCSALISPVLEWLDLSVFRARLKAFDPSEIEKYLESGLWQESTGCVRLEDFHKPYIKSSSKNLSVGLGLNVESLLGVLKLGAKLSSL.

Asp-69 (proton acceptor) is an active-site residue.

This sequence belongs to the Maf family. A divalent metal cation is required as a cofactor.

It localises to the cytoplasm. It carries out the reaction a ribonucleoside 5'-triphosphate + H2O = a ribonucleoside 5'-phosphate + diphosphate + H(+). The enzyme catalyses a 2'-deoxyribonucleoside 5'-triphosphate + H2O = a 2'-deoxyribonucleoside 5'-phosphate + diphosphate + H(+). In terms of biological role, nucleoside triphosphate pyrophosphatase. May have a dual role in cell division arrest and in preventing the incorporation of modified nucleotides into cellular nucleic acids. This Helicobacter pylori (strain HPAG1) protein is Nucleoside triphosphate pyrophosphatase.